A 236-amino-acid chain; its full sequence is MRFPSPLTEGRLVRRYKRFLADVELADGRVVTAHCANPGTMLGLIAPGRPVLLSASTNPARKLAWSWEMVQADLPGGPQWVGINTLRPNLLVAEAFREGRLPPLSGAATLRPEVRYGRASRVDFLAEGPAGPCHVEVKNCHMMREAGLAEFPDCVAARSARHMDELADVVRGGGRALLIVVVQMRAARFDVAGDIDPGFAAAFRRARAAGVETVAYACRLDPDEVTIDREIPIVTA.

The protein belongs to the SfsA family.

The protein is Sugar fermentation stimulation protein homolog of Methylobacterium nodulans (strain LMG 21967 / CNCM I-2342 / ORS 2060).